The chain runs to 78 residues: D-alanyl carrier protein (78 aa).

In terms of domain architecture, Carrier spans 1–78 (MDFKQEVLDV…NIVNQLSELK (78 aa)). O-(pantetheine 4'-phosphoryl)serine is present on S36.

The protein belongs to the DltC family. In terms of processing, 4'-phosphopantetheine is transferred from CoA to a specific serine of apo-DCP.

The protein localises to the cytoplasm. It participates in cell wall biogenesis; lipoteichoic acid biosynthesis. Functionally, carrier protein involved in the D-alanylation of lipoteichoic acid (LTA). The loading of thioester-linked D-alanine onto DltC is catalyzed by D-alanine--D-alanyl carrier protein ligase DltA. The DltC-carried D-alanyl group is further transferred to cell membrane phosphatidylglycerol (PG) by forming an ester bond, probably catalyzed by DltD. D-alanylation of LTA plays an important role in modulating the properties of the cell wall in Gram-positive bacteria, influencing the net charge of the cell wall. In Bacillus subtilis (strain 168), this protein is D-alanyl carrier protein.